A 351-amino-acid polypeptide reads, in one-letter code: Dihydroorotate dehydrogenase (quinone) (351 aa).

FMN contacts are provided by residues 67–71 (AGFDK) and Thr-91. Lys-71 contributes to the substrate binding site. A substrate-binding site is contributed by 116-120 (NAMGF). FMN-binding residues include Asn-145 and Asn-178. Position 178 (Asn-178) interacts with substrate. Residue Ser-181 is the Nucleophile of the active site. Asn-183 is a binding site for substrate. The FMN site is built by Lys-214 and Thr-242. 243–244 (NT) contacts substrate. FMN-binding positions include Gly-262, Gly-291, and 312–313 (YS).

The protein belongs to the dihydroorotate dehydrogenase family. Type 2 subfamily. In terms of assembly, monomer. FMN is required as a cofactor.

The protein localises to the cell membrane. The catalysed reaction is (S)-dihydroorotate + a quinone = orotate + a quinol. The protein operates within pyrimidine metabolism; UMP biosynthesis via de novo pathway; orotate from (S)-dihydroorotate (quinone route): step 1/1. Catalyzes the conversion of dihydroorotate to orotate with quinone as electron acceptor. This chain is Dihydroorotate dehydrogenase (quinone), found in Helicobacter pylori (strain P12).